The chain runs to 130 residues: Small ribosomal subunit protein uS11c (130 aa).

The protein belongs to the universal ribosomal protein uS11 family. As to quaternary structure, part of the 30S ribosomal subunit.

It localises to the plastid. The protein resides in the chloroplast. The polypeptide is Small ribosomal subunit protein uS11c (Pyropia yezoensis (Susabi-nori)).